A 756-amino-acid polypeptide reads, in one-letter code: Pro-neuregulin-2, membrane-bound isoform (756 aa).

The propeptide occupies 1–19 (MRRDPAPGFSMLLFGVSLA). Over 20-315 (CYSPSLKSVQ…KEAEELYQKR (296 aa)) the chain is Extracellular. N-linked (GlcNAc...) asparagine glycans are attached at residues asparagine 55, asparagine 186, and asparagine 254. One can recognise an Ig-like C2-type domain in the interval 145-240 (PKLKKMKSQT…RGRLHVNSVS (96 aa)). Cystine bridges form between cysteine 165-cysteine 219, cysteine 253-cysteine 267, cysteine 261-cysteine 278, and cysteine 280-cysteine 289. Residues 249–290 (HARKCNETAKSYCVNGGVCYYIEGINQLSCKCPVGYTGDRCQ) enclose the EGF-like domain. N-linked (GlcNAc...) asparagine glycosylation occurs at asparagine 296. The helical transmembrane segment at 316-336 (VLTITGICVALLVVGIVCVVA) threads the bilayer. Residues 337-756 (YCKTKKQRRQ…TRAKQDSGPL (420 aa)) are Cytoplasmic-facing. Disordered regions lie at residues 402–439 (TFSGSHSCSPSHHCSTATPTSSHRHESHTWSLERSESL), 557–578 (LLRHPAPPGPGPGSGPGADMQR), 608–694 (ASPF…DGAL), and 711–756 (LRSD…SGPL). Residues 404-416 (SGSHSCSPSHHCS) are compositionally biased toward low complexity. Basic and acidic residues predominate over residues 424 to 437 (HRHESHTWSLERSE). Positions 654 to 682 (LNGLAAQRARAARDSLSLSSGSGCGSASA) are enriched in low complexity.

This sequence belongs to the neuregulin family. As to quaternary structure, interacts with ERBB3 and ERBB4. Post-translationally, proteolytic cleavage close to the plasma membrane on the external face leads to the release of the soluble growth factor form. In terms of processing, extensive glycosylation precedes the proteolytic cleavage. As to expression, highest expression in the brain, with lower levels in the lung. In the cerebellum, found in granule and Purkinje cells.

Its subcellular location is the cell membrane. The protein localises to the secreted. Direct ligand for ERBB3 and ERBB4 tyrosine kinase receptors. Concomitantly recruits ERBB1 and ERBB2 coreceptors, resulting in ligand-stimulated tyrosine phosphorylation and activation of the ERBB receptors. May also promote the heterodimerization with the EGF receptor. The chain is Pro-neuregulin-2, membrane-bound isoform (Nrg2) from Mus musculus (Mouse).